The sequence spans 571 residues: Isocitrate dehydrogenase kinase/phosphatase 2 (571 aa).

Residues 313–319 and lysine 334 contribute to the ATP site; that span reads APGTPGM. The active site involves aspartate 369.

This sequence belongs to the AceK family.

It localises to the cytoplasm. It carries out the reaction L-seryl-[isocitrate dehydrogenase] + ATP = O-phospho-L-seryl-[isocitrate dehydrogenase] + ADP + H(+). Functionally, bifunctional enzyme which can phosphorylate or dephosphorylate isocitrate dehydrogenase (IDH) on a specific serine residue. This is a regulatory mechanism which enables bacteria to bypass the Krebs cycle via the glyoxylate shunt in response to the source of carbon. When bacteria are grown on glucose, IDH is fully active and unphosphorylated, but when grown on acetate or ethanol, the activity of IDH declines drastically concomitant with its phosphorylation. The chain is Isocitrate dehydrogenase kinase/phosphatase 2 from Pseudoalteromonas translucida (strain TAC 125).